Here is a 574-residue protein sequence, read N- to C-terminus: Sorting nexin-33 (574 aa).

The region spanning 1 to 61 is the SH3 domain; it reads MALKGRALYD…PASYVEIVRS (61 aa). Positions 68–119 are disordered; it reads ADYSSSPAGSPGAQVSLYNSPSVASPARSGGGSGFLSNQGSFEEDDDDDWDD. Phosphoserine occurs at positions 77 and 92. Over residues 109–119 the composition is skewed to acidic residues; the sequence is FEEDDDDDWDD. In terms of domain architecture, PX spans 230-340; that stretch reads FACSVEDPTK…HFLSCLDDKQ (111 aa). The 204-residue stretch at 371-574 folds into the BAR domain; that stretch reads LQDVEDRVDT…EKTLRMYDNL (204 aa).

The protein belongs to the sorting nexin family. As to quaternary structure, homodimer (via BAR domain). Interacts with ADAM15. Interacts with FASLG. Interacts (via SH3 domain) with DNM1 and DNM2. Interacts with WASL. Interacts with FCHSD1 (via the F-BAR domain). Phosphorylated. In terms of tissue distribution, detected in heart and pancreas.

The protein localises to the cytoplasm. Its subcellular location is the cytosol. The protein resides in the membrane. It is found in the cytoplasmic vesicle membrane. In terms of biological role, plays a role in the reorganization of the cytoskeleton, endocytosis and cellular vesicle trafficking via its interactions with membranes, WASL, DNM1 and DNM2. Acts both during interphase and at the end of mitotic cell divisions. Required for efficient progress through mitosis and cytokinesis. Required for normal formation of the cleavage furrow at the end of mitosis. Modulates endocytosis of cell-surface proteins, such as APP and PRNP; this then modulates the secretion of APP and PRNP peptides. Promotes membrane tubulation (in vitro). May promote the formation of macropinosomes. The sequence is that of Sorting nexin-33 (SNX33) from Homo sapiens (Human).